A 576-amino-acid polypeptide reads, in one-letter code: Arginine--tRNA ligase (576 aa).

A 'HIGH' region motif is present at residues P122 to H132.

The protein belongs to the class-I aminoacyl-tRNA synthetase family. Monomer.

Its subcellular location is the cytoplasm. It carries out the reaction tRNA(Arg) + L-arginine + ATP = L-arginyl-tRNA(Arg) + AMP + diphosphate. This Yersinia enterocolitica serotype O:8 / biotype 1B (strain NCTC 13174 / 8081) protein is Arginine--tRNA ligase.